The following is a 505-amino-acid chain: Glucose-6-phosphate 1-dehydrogenase (505 aa).

At Ser-2 the chain carries N-acetylserine. NADP(+) is bound by residues 18–25 (GASGDLAK) and Arg-52. Ser-142 carries the phosphoserine modification. Tyr-145 is subject to Phosphotyrosine. Position 157 (Lys-157) interacts with NADP(+). Residues Lys-157, 187-191 (HYLGK), Glu-225, and Asp-244 contribute to the D-glucose 6-phosphate site. The Proton acceptor role is filled by His-249. Position 340 (Arg-340) interacts with NADP(+). A D-glucose 6-phosphate-binding site is contributed by Lys-343. Lys-349, Arg-353, and Arg-375 together coordinate NADP(+). Residue Gln-377 coordinates D-glucose 6-phosphate. Residues 383–385 (YLK) and Arg-470 contribute to the NADP(+) site.

The protein belongs to the glucose-6-phosphate dehydrogenase family.

The catalysed reaction is D-glucose 6-phosphate + NADP(+) = 6-phospho-D-glucono-1,5-lactone + NADPH + H(+). It participates in carbohydrate degradation; pentose phosphate pathway; D-ribulose 5-phosphate from D-glucose 6-phosphate (oxidative stage): step 1/3. In terms of biological role, catalyzes the rate-limiting step of the oxidative pentose-phosphate pathway, which represents a route for the dissimilation of carbohydrates besides glycolysis. The main function of this enzyme is to provide reducing power (NADPH) and pentose phosphates for fatty acid and nucleic acid synthesis. The sequence is that of Glucose-6-phosphate 1-dehydrogenase (ZWF1) from Saccharomyces cerevisiae (strain ATCC 204508 / S288c) (Baker's yeast).